The following is an 87-amino-acid chain: uncharacterized protein (87 aa).

This sequence to A.fulgidus AF_1348 and AF_1363.

This is an uncharacterized protein from Archaeoglobus fulgidus (strain ATCC 49558 / DSM 4304 / JCM 9628 / NBRC 100126 / VC-16).